The following is an 833-amino-acid chain: Ventricular zone-expressed PH domain-containing protein homolog 1 (833 aa).

The tract at residues 201–319 (TELLALMSQL…TYLVSQLANM (119 aa)) is interaction with TGFBR1. The segment at 458–505 (KGVGSDDGEDENRGDIPASISLSEIDPLGQGNDKLPFKTDTERSQLGE) is disordered. Positions 492–502 (LPFKTDTERSQ) are enriched in basic and acidic residues. The interaction with TGFBR1 stretch occupies residues 663 to 833 (ESTFPQQKDL…RESREVTTYL (171 aa)). The PH domain occupies 716–819 (QPLIEGKLKE…WLQCINVAVA (104 aa)).

The protein belongs to the MELT/VEPH family. In terms of assembly, interacts with TGFBR1.

It is found in the cell membrane. Interacts with TGF-beta receptor type-1 (TGFBR1) and inhibits dissociation of activated SMAD2 from TGFBR1, impeding its nuclear accumulation and resulting in impaired TGF-beta signaling. May also affect FOXO, Hippo and Wnt signaling. This chain is Ventricular zone-expressed PH domain-containing protein homolog 1 (VEPH1), found in Homo sapiens (Human).